The chain runs to 822 residues: MSGWRKIYYKLLNLPLKLLVKSKVIPADPVVELGLDPSRPILYVLPYNSQADLLTLRAKCLALGLPDPSQSFEFNGVELPSHVFINDGPRVFRYYVPKQKSVKLFHDYLDLHRANPDLDVQMVPVSVMFGRSPGREGHSQATPHLRLLNGIEKFFAVLWLGRDSFVRFSSPVSLRYMATEHGTDKTIAHKLARVARMHFSRQRLAAVGPRLPVRQELFNKLLDSKAIKKAVDDEARSKKISHEKAQQNAIALMEEIAADFSYEAVRLSDRVLSWTWNRLYQGINVHNAERVRQLAQDGHGIVYVPCHRSHMDYLLLSYVLYHQGLVPPHIAAGINLNFWPAGPIFRRLGAFFIRRTFKGNKLYSTIFREYLGELFARGYSVEYFMEGGRSRTGRLLEPKTGTLAMTIQAMLRGGTRPITLVPIYVGYEHVMEVGTYAKELRGAVKEKEGFMQMVRGLRKLRNLGQGYVNFGEPLPLTTYLNQHVPQWRDAIDPIEAQRPSWLTPTVQDISMDIMVRINNSAAANAMNLCSTALLASRQRSLTREQMQEQLDCYLQLLRQVPYHKDITVPKKTADELLEHALSMNKFEVEKDSIGDIIILPREQAVLMTYYRNNIQHLLVLPSLIASIVIHHRRITLAEVVRQIALIYPLLQSELFLHYSKEQLPGVLETLANELVQQQLLCSRDGELAINPPRIRTLQLLSAGVRETLQRYAITLSLLCANPEINRGTLEKESRNMAQRLSVLHGINAPEFFDKAVFSTLVATLRTEGYITDSAEAAQGDIVAIYNILGDLITPEVRLTIESASSSAEMEAESQAVEETTQE.

The HXXXXD motif motif lies at 306–311 (CHRSHM). Positions 803–822 (ASSSAEMEAESQAVEETTQE) are disordered.

The protein belongs to the GPAT/DAPAT family.

The protein resides in the cell inner membrane. It carries out the reaction sn-glycerol 3-phosphate + an acyl-CoA = a 1-acyl-sn-glycero-3-phosphate + CoA. It functions in the pathway phospholipid metabolism; CDP-diacylglycerol biosynthesis; CDP-diacylglycerol from sn-glycerol 3-phosphate: step 1/3. The protein is Glycerol-3-phosphate acyltransferase of Pectobacterium carotovorum subsp. carotovorum (strain PC1).